We begin with the raw amino-acid sequence, 372 residues long: MADS-box transcription factor pvg4 (372 aa).

Positions 1 to 61 constitute an MADS-box domain; it reads MGRKKISIAP…GRLHVFCSSD (61 aa). The segment at 81–187 is disordered; that stretch reads SHFSSSPVEE…HPPHPHFHNN (107 aa). A compositionally biased stretch (low complexity) spans 84–100; that stretch reads SSSPVEESSTVSPETTT. The span at 114–145 shows a compositional bias: polar residues; it reads QDQPLSDSQLDTGDSPATSETTVQDYNPQVQS. Positions 167–184 are enriched in basic residues; sequence QHHHPHTRPPHHPPHPHF.

The protein resides in the nucleus. Acts in transcription regulation. May bind to a MEF2-like typee II promoter sequence. The protein is MADS-box transcription factor pvg4 (pvg4) of Schizosaccharomyces pombe (strain 972 / ATCC 24843) (Fission yeast).